Here is an 893-residue protein sequence, read N- to C-terminus: AP-4 complex accessory subunit RUSC1 (893 aa).

Disordered regions lie at residues 31–223, 237–332, 339–358, and 366–444; these read ELRE…GKAE, EKTE…KDRS, SPDT…APPR, and LRSR…RAHA. Positions 77–87 are enriched in polar residues; it reads HGSSIENQQDP. Low complexity-rich tracts occupy residues 95 to 117 and 149 to 165; these read SPSD…DESP and PSTC…DSCS. Residues 177–187 are compositionally biased toward polar residues; that stretch reads SNCNALTTCQD. Residues 237–257 are compositionally biased toward basic and acidic residues; that stretch reads EKTEAGWKTIEDSDSGRKTDE. Pro residues-rich tracts occupy residues 373-382 and 390-399; these read QPPPVPPRDP and PPRPPPPPVP. The segment at 463–598 is interaction with TRAF6; the sequence is MAEAQSGTGQ…FHAFILGLLN (136 aa). An RUN domain is found at 515–659; it reads DVGHLVLTTL…LTFHLDLLFE (145 aa). Residues 599 to 665 are interaction with IKBKG; that stretch reads TKQLELWFSS…LLFEHHHHLP (67 aa). Disordered regions lie at residues 700 to 721 and 751 to 772; these read RGTS…PAGS and HGTT…TPGR. 2 stretches are compositionally biased toward low complexity: residues 702-714 and 754-770; these read TSGE…STPS and TAEA…QTTP. The 59-residue stretch at 835-893 folds into the SH3 domain; the sequence is QADRAVRALCDHTAAGPDQLSFQRGELLRVIATVDEDWLRCGRDGVEGLVPVGYTSLVL.

In terms of assembly, associated component of the adapter-like complex 4 (AP-4). Interacts with IKBKG and TRAF6. Interacts with F-actin, acetylated actin, TUBB3, STX1A, KIF5B and KLC1. Phosphorylated on serine residues following nuclear translocation. Post-translationally, polyubiquitinated; polyubiquitination involves TRAF6. In terms of tissue distribution, expressed in brain, brain stem and spinal cord (at protein level).

Its subcellular location is the cytoplasm. It is found in the nucleus. It localises to the cytoskeleton. The protein resides in the cytoplasmic vesicle. The protein localises to the early endosome. Its subcellular location is the postsynaptic density. It is found in the golgi apparatus. In terms of biological role, associates with the adapter-like complex 4 (AP-4) and may therefore play a role in vesicular trafficking of proteins at the trans-Golgi network. Signaling adapter which plays a role in neuronal differentiation. Involved in regulation of NGF-dependent neurite outgrowth. May play a role in neuronal vesicular trafficking, specifically involving pre-synaptic membrane proteins. Seems to be involved in signaling pathways that are regulated by the prolonged activation of MAPK. Can regulate the polyubiquitination of IKBKG and thus may be involved in regulation of the NF-kappa-B pathway. The protein is AP-4 complex accessory subunit RUSC1 of Mus musculus (Mouse).